A 430-amino-acid polypeptide reads, in one-letter code: Paraneoplastic antigen-like protein 8A (430 aa).

Over residues tryptophan 219–proline 228 the composition is skewed to basic and acidic residues. Disordered regions lie at residues tryptophan 219 to tyrosine 270, aspartate 313 to lysine 364, and glycine 392 to leucine 430. The segment covering leucine 232 to asparagine 250 has biased composition (basic residues). A compositionally biased stretch (polar residues) spans serine 261 to tyrosine 270.

This sequence belongs to the PNMA family.

The protein is Paraneoplastic antigen-like protein 8A of Mus musculus (Mouse).